The sequence spans 194 residues: Imidazole glycerol phosphate synthase subunit HisH (194 aa).

Positions 1–194 (MIIIDTGCAN…QLLKNFVENL (194 aa)) constitute a Glutamine amidotransferase type-1 domain. Residue Cys-75 is the Nucleophile of the active site. Catalysis depends on residues His-175 and Glu-177.

Heterodimer of HisH and HisF.

The protein localises to the cytoplasm. The enzyme catalyses 5-[(5-phospho-1-deoxy-D-ribulos-1-ylimino)methylamino]-1-(5-phospho-beta-D-ribosyl)imidazole-4-carboxamide + L-glutamine = D-erythro-1-(imidazol-4-yl)glycerol 3-phosphate + 5-amino-1-(5-phospho-beta-D-ribosyl)imidazole-4-carboxamide + L-glutamate + H(+). It catalyses the reaction L-glutamine + H2O = L-glutamate + NH4(+). Its pathway is amino-acid biosynthesis; L-histidine biosynthesis; L-histidine from 5-phospho-alpha-D-ribose 1-diphosphate: step 5/9. Functionally, IGPS catalyzes the conversion of PRFAR and glutamine to IGP, AICAR and glutamate. The HisH subunit catalyzes the hydrolysis of glutamine to glutamate and ammonia as part of the synthesis of IGP and AICAR. The resulting ammonia molecule is channeled to the active site of HisF. In Mannheimia succiniciproducens (strain KCTC 0769BP / MBEL55E), this protein is Imidazole glycerol phosphate synthase subunit HisH.